The following is a 175-amino-acid chain: SsrA-binding protein (175 aa).

The protein belongs to the SmpB family.

The protein localises to the cytoplasm. In terms of biological role, required for rescue of stalled ribosomes mediated by trans-translation. Binds to transfer-messenger RNA (tmRNA), required for stable association of tmRNA with ribosomes. tmRNA and SmpB together mimic tRNA shape, replacing the anticodon stem-loop with SmpB. tmRNA is encoded by the ssrA gene; the 2 termini fold to resemble tRNA(Ala) and it encodes a 'tag peptide', a short internal open reading frame. During trans-translation Ala-aminoacylated tmRNA acts like a tRNA, entering the A-site of stalled ribosomes, displacing the stalled mRNA. The ribosome then switches to translate the ORF on the tmRNA; the nascent peptide is terminated with the 'tag peptide' encoded by the tmRNA and targeted for degradation. The ribosome is freed to recommence translation, which seems to be the essential function of trans-translation. This chain is SsrA-binding protein, found in Prochlorococcus marinus subsp. pastoris (strain CCMP1986 / NIES-2087 / MED4).